The sequence spans 162 residues: Malaria protein EXP-1 (162 aa).

An N-terminal signal peptide occupies residues methionine 1–alanine 22. A helical membrane pass occupies residues valine 80–tyrosine 101. Positions proline 109 to histidine 162 are disordered. A compositionally biased stretch (low complexity) spans serine 114–asparagine 130. Residues asparagine 120–proline 137 are epitope (deduced). Over residues proline 137–histidine 162 the composition is skewed to polar residues.

Its subcellular location is the parasitophorous vacuole membrane. This is Malaria protein EXP-1 (EXP-1) from Plasmodium falciparum.